The chain runs to 635 residues: Transaminated amino acid decarboxylase (635 aa).

K588 is covalently cross-linked (Glycyl lysine isopeptide (Lys-Gly) (interchain with G-Cter in ubiquitin)).

The protein belongs to the TPP enzyme family. Requires Mg(2+) as cofactor. Thiamine diphosphate serves as cofactor.

It is found in the cytoplasm. The catalysed reaction is 4-methyl-2-oxopentanoate + H(+) = 3-methylbutanal + CO2. It catalyses the reaction (S)-3-methyl-2-oxopentanoate + H(+) = 2-methylbutanal + CO2. It carries out the reaction indole-3-pyruvate + H(+) = indole-3-acetaldehyde + CO2. The enzyme catalyses 3-phenylpyruvate + H(+) = 2-phenylacetaldehyde + CO2. The catalysed reaction is 4-methylsulfanyl-2-oxobutanoate + H(+) = 3-methylsulfanylpropanal + CO2. It catalyses the reaction 3-(4-hydroxyphenyl)pyruvate + H(+) = (4-hydroxyphenyl)acetaldehyde + CO2. It functions in the pathway amino-acid degradation; Ehrlich pathway. One of five 2-oxo acid decarboxylases (PDC1, PDC5, PDC6, ARO10, and THI3) involved in amino acid catabolism. The enzyme catalyzes the decarboxylation of amino acids, which, in a first step, have been transaminated to the corresponding 2-oxo acids (alpha-keto-acids). In a third step, the resulting aldehydes are reduced to alcohols, collectively referred to as fusel oils or alcohols. Its preferred substrates are the transaminated amino acids derived from phenylalanine (phenylpyruvate), tryptophan (3-(indol-3-yl)pyruvate), and probably tyrosine (4-hydroxyphenylpyruvate), but also isoleucine ((3S)-3-methyl-2-oxopentanoate, also alpha-keto-beta-methylvalerate) and methionine (4-methylthio-2-oxobutanoate), whereas transaminated leucine (4-methyl-2-oxopentanoate, also alpha-keto-isocaproate) is a low efficiency substrate and transaminated valine and pyruvate are no substrates. In analogy to the pyruvate decarboxylases the enzyme may in a side-reaction catalyze condensation (or carboligation) reactions leading to the formation of 2-hydroxy ketone, collectively called acyloins. In Saccharomyces cerevisiae (strain ATCC 204508 / S288c) (Baker's yeast), this protein is Transaminated amino acid decarboxylase (ARO10).